Consider the following 209-residue polypeptide: Thiamine-phosphate synthase (209 aa).

4-amino-2-methyl-5-(diphosphooxymethyl)pyrimidine is bound by residues 36 to 40 (QYRDK) and asparagine 68. Aspartate 69 and aspartate 87 together coordinate Mg(2+). Residue threonine 106 participates in 4-amino-2-methyl-5-(diphosphooxymethyl)pyrimidine binding. Position 133–135 (133–135 (SST)) interacts with 2-[(2R,5Z)-2-carboxy-4-methylthiazol-5(2H)-ylidene]ethyl phosphate. Residue lysine 136 participates in 4-amino-2-methyl-5-(diphosphooxymethyl)pyrimidine binding. Glycine 163 lines the 2-[(2R,5Z)-2-carboxy-4-methylthiazol-5(2H)-ylidene]ethyl phosphate pocket.

Belongs to the thiamine-phosphate synthase family. Requires Mg(2+) as cofactor.

It carries out the reaction 2-[(2R,5Z)-2-carboxy-4-methylthiazol-5(2H)-ylidene]ethyl phosphate + 4-amino-2-methyl-5-(diphosphooxymethyl)pyrimidine + 2 H(+) = thiamine phosphate + CO2 + diphosphate. It catalyses the reaction 2-(2-carboxy-4-methylthiazol-5-yl)ethyl phosphate + 4-amino-2-methyl-5-(diphosphooxymethyl)pyrimidine + 2 H(+) = thiamine phosphate + CO2 + diphosphate. The enzyme catalyses 4-methyl-5-(2-phosphooxyethyl)-thiazole + 4-amino-2-methyl-5-(diphosphooxymethyl)pyrimidine + H(+) = thiamine phosphate + diphosphate. Its pathway is cofactor biosynthesis; thiamine diphosphate biosynthesis; thiamine phosphate from 4-amino-2-methyl-5-diphosphomethylpyrimidine and 4-methyl-5-(2-phosphoethyl)-thiazole: step 1/1. In terms of biological role, condenses 4-methyl-5-(beta-hydroxyethyl)thiazole monophosphate (THZ-P) and 2-methyl-4-amino-5-hydroxymethyl pyrimidine pyrophosphate (HMP-PP) to form thiamine monophosphate (TMP). The protein is Thiamine-phosphate synthase of Pseudomonas aeruginosa (strain LESB58).